The chain runs to 780 residues: E3 SUMO-protein ligase gei-17 (780 aa).

Residues 181–210 (APLHSSFPNHGRSSQQSLQKSEKSNRPKKM) form a disordered region. The PINIT domain maps to 203–367 (KSNRPKKMYA…AAGVYFVHRV (165 aa)). The segment at 400–485 (GEDDIAMDRL…LAKVDKNTTE (86 aa)) adopts an SP-RING-type zinc-finger fold. Residues Cys-431, His-433, Cys-454, and Cys-457 each contribute to the Zn(2+) site. Residues 519–530 (GTASCSSTNGNG) are compositionally biased toward polar residues. Disordered stretches follow at residues 519 to 544 (GTAS…ADDD), 560 to 594 (IMNS…KTKD), and 732 to 755 (QQHH…SFYA). Residues 732 to 749 (QQHHLQQQQQQQQSPQIM) are compositionally biased toward low complexity.

It belongs to the PIAS family. In terms of assembly, may interact with gex-3.

Its pathway is protein modification; protein sumoylation. Functions as an E3-type smo-1 ligase. Mediates smo-1 conjugation to air-2 in vitro and is required for proper chromosome alignment. In the early embryo, specifically suppresses checkpoint activation in response to DNA damage, maybe by promoting mus-101 sumoylation. In embryos, plays a role in determining telomere localization in the nucleus. Acts with pie-1 to promote piRNA-mediated silencing and fertility in the adult germline. The sequence is that of E3 SUMO-protein ligase gei-17 from Caenorhabditis elegans.